A 182-amino-acid chain; its full sequence is Photosystem I assembly protein Ycf4 (182 aa).

The next 2 helical transmembrane spans lie at 22 to 42 (WAIIIGSGGLGFLFTGLSSYL) and 66 to 86 (FYGILGIFFSLYLGLTILFSV).

Belongs to the Ycf4 family.

It is found in the plastid. Its subcellular location is the chloroplast thylakoid membrane. Its function is as follows. Seems to be required for the assembly of the photosystem I complex. In Tupiella akineta (Green alga), this protein is Photosystem I assembly protein Ycf4.